Reading from the N-terminus, the 310-residue chain is Ribosomal RNA small subunit methyltransferase H (310 aa).

Residues 32-34 (GGH), Asp-52, Phe-79, Asp-100, and Gln-107 each bind S-adenosyl-L-methionine.

It belongs to the methyltransferase superfamily. RsmH family.

The protein resides in the cytoplasm. It carries out the reaction cytidine(1402) in 16S rRNA + S-adenosyl-L-methionine = N(4)-methylcytidine(1402) in 16S rRNA + S-adenosyl-L-homocysteine + H(+). Functionally, specifically methylates the N4 position of cytidine in position 1402 (C1402) of 16S rRNA. This chain is Ribosomal RNA small subunit methyltransferase H, found in Bacillus cytotoxicus (strain DSM 22905 / CIP 110041 / 391-98 / NVH 391-98).